The primary structure comprises 78 residues: Small ribosomal subunit protein bS18 (78 aa).

Belongs to the bacterial ribosomal protein bS18 family. As to quaternary structure, part of the 30S ribosomal subunit. Forms a tight heterodimer with protein bS6.

In terms of biological role, binds as a heterodimer with protein bS6 to the central domain of the 16S rRNA, where it helps stabilize the platform of the 30S subunit. The protein is Small ribosomal subunit protein bS18 of Limosilactobacillus reuteri (strain DSM 20016) (Lactobacillus reuteri).